An 875-amino-acid polypeptide reads, in one-letter code: Valine--tRNA ligase (875 aa).

A 'HIGH' region motif is present at residues 45–55 (PNVTGVLHMGH). The 'KMSKS' region signature appears at 524 to 528 (KMSKS). Lys527 contacts ATP. A coiled-coil region spans residues 803-837 (VKLLIDKTKELIRLEKQLEKYKMLKISVSKKLENE).

The protein belongs to the class-I aminoacyl-tRNA synthetase family. ValS type 1 subfamily. Monomer.

It is found in the cytoplasm. The enzyme catalyses tRNA(Val) + L-valine + ATP = L-valyl-tRNA(Val) + AMP + diphosphate. Catalyzes the attachment of valine to tRNA(Val). As ValRS can inadvertently accommodate and process structurally similar amino acids such as threonine, to avoid such errors, it has a 'posttransfer' editing activity that hydrolyzes mischarged Thr-tRNA(Val) in a tRNA-dependent manner. The polypeptide is Valine--tRNA ligase (Borrelia garinii subsp. bavariensis (strain ATCC BAA-2496 / DSM 23469 / PBi) (Borreliella bavariensis)).